We begin with the raw amino-acid sequence, 316 residues long: Pantothenate kinase (316 aa).

Residue 95–102 (GSVAVGKS) coordinates ATP.

This sequence belongs to the prokaryotic pantothenate kinase family.

It localises to the cytoplasm. It catalyses the reaction (R)-pantothenate + ATP = (R)-4'-phosphopantothenate + ADP + H(+). It functions in the pathway cofactor biosynthesis; coenzyme A biosynthesis; CoA from (R)-pantothenate: step 1/5. This Cronobacter sakazakii (strain ATCC BAA-894) (Enterobacter sakazakii) protein is Pantothenate kinase.